We begin with the raw amino-acid sequence, 521 residues long: Bifunctional purine biosynthesis protein PurH (521 aa).

The MGS-like domain maps to 1 to 149 (MSDPVIKRAL…KNNESVTVVT (149 aa)).

It belongs to the PurH family.

The catalysed reaction is (6R)-10-formyltetrahydrofolate + 5-amino-1-(5-phospho-beta-D-ribosyl)imidazole-4-carboxamide = 5-formamido-1-(5-phospho-D-ribosyl)imidazole-4-carboxamide + (6S)-5,6,7,8-tetrahydrofolate. It catalyses the reaction IMP + H2O = 5-formamido-1-(5-phospho-D-ribosyl)imidazole-4-carboxamide. It functions in the pathway purine metabolism; IMP biosynthesis via de novo pathway; 5-formamido-1-(5-phospho-D-ribosyl)imidazole-4-carboxamide from 5-amino-1-(5-phospho-D-ribosyl)imidazole-4-carboxamide (10-formyl THF route): step 1/1. The protein operates within purine metabolism; IMP biosynthesis via de novo pathway; IMP from 5-formamido-1-(5-phospho-D-ribosyl)imidazole-4-carboxamide: step 1/1. The sequence is that of Bifunctional purine biosynthesis protein PurH from Chlorobium phaeobacteroides (strain DSM 266 / SMG 266 / 2430).